A 215-amino-acid polypeptide reads, in one-letter code: 7-methyl-GTP pyrophosphatase (215 aa).

The active-site Proton acceptor is the Asp79.

The protein belongs to the Maf family. YceF subfamily. A divalent metal cation serves as cofactor.

It is found in the cytoplasm. The enzyme catalyses N(7)-methyl-GTP + H2O = N(7)-methyl-GMP + diphosphate + H(+). Its function is as follows. Nucleoside triphosphate pyrophosphatase that hydrolyzes 7-methyl-GTP (m(7)GTP). May have a dual role in cell division arrest and in preventing the incorporation of modified nucleotides into cellular nucleic acids. This chain is 7-methyl-GTP pyrophosphatase, found in Burkholderia thailandensis (strain ATCC 700388 / DSM 13276 / CCUG 48851 / CIP 106301 / E264).